The following is a 219-amino-acid chain: Ribosomal RNA small subunit methyltransferase G (219 aa).

Residues Gly-85, Leu-90, 136 to 137, and Arg-151 each bind S-adenosyl-L-methionine; that span reads VE.

It belongs to the methyltransferase superfamily. RNA methyltransferase RsmG family.

The protein localises to the cytoplasm. The catalysed reaction is guanosine(527) in 16S rRNA + S-adenosyl-L-methionine = N(7)-methylguanosine(527) in 16S rRNA + S-adenosyl-L-homocysteine. In terms of biological role, specifically methylates the N7 position of guanine in position 527 of 16S rRNA. This chain is Ribosomal RNA small subunit methyltransferase G, found in Cellvibrio japonicus (strain Ueda107) (Pseudomonas fluorescens subsp. cellulosa).